The primary structure comprises 113 residues: Prefoldin subunit beta (113 aa).

This sequence belongs to the prefoldin subunit beta family. Heterohexamer of two alpha and four beta subunits.

The protein resides in the cytoplasm. Molecular chaperone capable of stabilizing a range of proteins. Seems to fulfill an ATP-independent, HSP70-like function in archaeal de novo protein folding. The sequence is that of Prefoldin subunit beta from Methanococcus maripaludis (strain DSM 14266 / JCM 13030 / NBRC 101832 / S2 / LL).